We begin with the raw amino-acid sequence, 297 residues long: Ribosomal RNA small subunit methyltransferase H (297 aa).

Residues 30-32 (GGY), aspartate 48, phenylalanine 75, aspartate 96, and glutamine 103 each bind S-adenosyl-L-methionine.

It belongs to the methyltransferase superfamily. RsmH family.

The protein resides in the cytoplasm. It carries out the reaction cytidine(1402) in 16S rRNA + S-adenosyl-L-methionine = N(4)-methylcytidine(1402) in 16S rRNA + S-adenosyl-L-homocysteine + H(+). Its function is as follows. Specifically methylates the N4 position of cytidine in position 1402 (C1402) of 16S rRNA. This chain is Ribosomal RNA small subunit methyltransferase H, found in Ehrlichia canis (strain Jake).